A 293-amino-acid polypeptide reads, in one-letter code: Ribosomal RNA small subunit methyltransferase A (293 aa).

Positions 36, 38, 63, 84, 111, and 132 each coordinate S-adenosyl-L-methionine.

This sequence belongs to the class I-like SAM-binding methyltransferase superfamily. rRNA adenine N(6)-methyltransferase family. RsmA subfamily.

It is found in the cytoplasm. It carries out the reaction adenosine(1518)/adenosine(1519) in 16S rRNA + 4 S-adenosyl-L-methionine = N(6)-dimethyladenosine(1518)/N(6)-dimethyladenosine(1519) in 16S rRNA + 4 S-adenosyl-L-homocysteine + 4 H(+). In terms of biological role, specifically dimethylates two adjacent adenosines (A1518 and A1519) in the loop of a conserved hairpin near the 3'-end of 16S rRNA in the 30S particle. May play a critical role in biogenesis of 30S subunits. This is Ribosomal RNA small subunit methyltransferase A from Treponema denticola (strain ATCC 35405 / DSM 14222 / CIP 103919 / JCM 8153 / KCTC 15104).